A 323-amino-acid chain; its full sequence is Transaldolase (323 aa).

The active-site Schiff-base intermediate with substrate is the K133.

This sequence belongs to the transaldolase family. Type 1 subfamily. Monomer.

It catalyses the reaction D-sedoheptulose 7-phosphate + D-glyceraldehyde 3-phosphate = D-erythrose 4-phosphate + beta-D-fructose 6-phosphate. It functions in the pathway carbohydrate degradation; pentose phosphate pathway; D-glyceraldehyde 3-phosphate and beta-D-fructose 6-phosphate from D-ribose 5-phosphate and D-xylulose 5-phosphate (non-oxidative stage): step 2/3. In terms of biological role, transaldolase important for the balance of metabolites in the pentose-phosphate pathway. Involved in xylose fermentation to ethanol. This chain is Transaldolase, found in Fusarium oxysporum f. sp. lycopersici (strain 4287 / CBS 123668 / FGSC 9935 / NRRL 34936) (Fusarium vascular wilt of tomato).